A 325-amino-acid chain; its full sequence is Hydroxymethylglutaryl-CoA lyase, mitochondrial (325 aa).

Residues 1 to 27 (MATVKKVLPRRLVGLATLRAVSTSSVG) constitute a mitochondrion transit peptide. In terms of domain architecture, Pyruvate carboxyltransferase spans 33–300 (VKIVEVGPRD…HTGVNLQKLL (268 aa)). Position 41 (Arg41) interacts with substrate. Asp42 is a binding site for a divalent metal cation. An N6-acetyllysine; alternate modification is found at Lys48. Lys48 carries the post-translational modification N6-succinyllysine; alternate. Residue Lys111 is modified to N6-acetyllysine. N6-acetyllysine; alternate is present on residues Lys137 and Lys179. 2 positions are modified to N6-succinyllysine; alternate: Lys137 and Lys179. His233 and His235 together coordinate a divalent metal cation. Residue Cys266 is part of the active site. Asn275 is a binding site for a divalent metal cation. The short motif at 323–325 (CKL) is the Microbody targeting signal element. Lys324 carries the N6-acetyllysine modification.

This sequence belongs to the HMG-CoA lyase family. In terms of assembly, homodimer; disulfide-linked. Can also form homotetramers.

Its subcellular location is the mitochondrion matrix. It localises to the peroxisome. It carries out the reaction (3S)-3-hydroxy-3-methylglutaryl-CoA = acetoacetate + acetyl-CoA. The protein operates within metabolic intermediate metabolism; (S)-3-hydroxy-3-methylglutaryl-CoA degradation; acetoacetate from (S)-3-hydroxy-3-methylglutaryl-CoA: step 1/1. Mitochondrial 3-hydroxy-3-methylglutaryl-CoA lyase that catalyzes a cation-dependent cleavage of (S)-3-hydroxy-3-methylglutaryl-CoA into acetyl-CoA and acetoacetate, a key step in ketogenesis. Terminal step in leucine catabolism. Ketone bodies (beta-hydroxybutyrate, acetoacetate and acetone) are essential as an alternative source of energy to glucose, as lipid precursors and as regulators of metabolism. The sequence is that of Hydroxymethylglutaryl-CoA lyase, mitochondrial (HMGCL) from Bos taurus (Bovine).